The primary structure comprises 495 residues: NAD(+)--protein-arginine ADP-ribosyltransferase Tre1 (495 aa).

The interval proline 278–valine 309 is disordered. One can recognise a TR mART core domain in the interval methionine 315–proline 495. The interval arginine 344 to proline 495 is ART domain. Catalysis depends on residues arginine 406, serine 431, and glutamate 466.

This sequence belongs to the Arg-specific ADP-ribosyltransferase family.

The protein resides in the secreted. The protein localises to the host cytoplasm. It catalyses the reaction L-arginyl-[protein] + NAD(+) = N(omega)-(ADP-D-ribosyl)-L-arginyl-[protein] + nicotinamide + H(+). Functionally, toxic component of a contact-dependent interbacterial competition system (also called effector-immunity systems). Acts by ADP-ribosylating a number of target proteins in target cells; E.coli target proteins include FtsZ, EFTu, RNase E, Fis, YegQ, GuaB and IF2. The protein is NAD(+)--protein-arginine ADP-ribosyltransferase Tre1 of Pseudomonas putida (strain GB-1).